A 597-amino-acid chain; its full sequence is Elongation factor 4 (597 aa).

A tr-type G domain is found at 4–181 (SKIRNFSIIA…AIVDYVPAPK (178 aa)). GTP contacts are provided by residues 16 to 21 (DHGKST) and 128 to 131 (NKID).

It belongs to the TRAFAC class translation factor GTPase superfamily. Classic translation factor GTPase family. LepA subfamily.

The protein resides in the cell membrane. It carries out the reaction GTP + H2O = GDP + phosphate + H(+). Its function is as follows. Required for accurate and efficient protein synthesis under certain stress conditions. May act as a fidelity factor of the translation reaction, by catalyzing a one-codon backward translocation of tRNAs on improperly translocated ribosomes. Back-translocation proceeds from a post-translocation (POST) complex to a pre-translocation (PRE) complex, thus giving elongation factor G a second chance to translocate the tRNAs correctly. Binds to ribosomes in a GTP-dependent manner. The protein is Elongation factor 4 of Mycoplasmopsis agalactiae (strain NCTC 10123 / CIP 59.7 / PG2) (Mycoplasma agalactiae).